We begin with the raw amino-acid sequence, 1128 residues long: MATKTAQPSADNLGSRAPVEPCGYIYVYPKEGFPFKEASLLGNKNVGASAMSLPLLSDLTVESNFSFNVKAVHKKIDMTTLLVRVSAYHREAIVFFNTDLFEPIFVGPGLDILCSDARSLFGYTNFVPRTDLRDTVDIKDLYAPFYSEDSCFMAVVVTEGFKERLYFGNLVPIIAQGLKVQINGREAVKIPLYDEDLFSKSHEHLPRFYIPSVSKYLHDSVFTSIAQALRIRDVESVIRASEKQSIQDQYKLAKIVNSKDFSLQSVKCQDASAFMVIDCIAAELAMSYGLSFLEAPQDPCAVLDYTSWPIFETAETEEDRIKAIQDWNAMMSVHVYTHLFSTNSVLYLTKINKQTQSNKSEQNVYNTYFMQHGLAYAADATQRENGEPAFSGAPKFSGGTYTLYHLALASSFSPHLLARNCYYMQFCQHQKSTTNANYSVPQYVGTAAASDLCELCQGTCPASCIHTLFYRLKDRFPPVLGSQRRDPYVVTGVSGQYNDLDMLGNFATFREKEDEAVQNAESEKYTYWQLIQNVVEKLSTMGVTEGTVGSELITDIQSFLKTFRDIDNVVDSEVVKFMNCLVKNNINFRETIKTVHHVLHYCCNVFWQAPCAMFLNLFYKSVLAIIQDICLPIAMTYEQDNPSIGMMPSEWLKVHYQTIWTNFKSSCLDRGVLTGSEHKIVHTDMFCDFLNIDSALSGQIVPMKMQVRLAKALLTVPKTIKIKNRIVFSNSSMTETIQSGFIKSATKKDSYIVTGPYMKFLNSLHKVMFPNAKISALYLWHTFSQKKQLPVLPGISRENMVELANYVETSSKMHDDMNVLDIIPTTLLTYAKVRLNNTILRTCGQTQFYATTLQCLLPTLQTISATEYPHVLLDQSIMSVDHYLSSIKDKHALTVQTTLKEDIATVGKQRPIVTVPLVVNKYTGINGNTQIFQCGNLGYFMGRGVDRNLIPDSTGFRRQNNSSYMRRRHVFMTPMVAHLVKKNSNLNNLTFEVETIRKNVQNIFEDKDNLNIFDNVVLELVKGLGDSCENITEDDLQFYLGEYYIMSDEIWSRFQIITDSGAPWSVENVTKVLGCNKQEECKFEFVGVEEQLSCVPPQIEEFAPQATLSTLAASRKRKITSILSDIDL.

Residues 453–466 (CELCQGTCPASCIH) fold into a zinc finger. A required for nuclear localization region spans residues 1098–1128 (QIEEFAPQATLSTLAASRKRKITSILSDIDL).

The protein belongs to the herpesviridae major DNA-binding protein family. As to quaternary structure, homooligomers. Forms double-helical filaments necessary for the formation of replication compartments within the host nucleus. Interacts with the origin-binding protein. Interacts with the helicase primase complex; this interaction stimulates primer synthesis activity of the helicase-primase complex. Interacts with the DNA polymerase. Interacts with the alkaline exonuclease; this interaction increases its nuclease processivity.

It is found in the host nucleus. Single-stranded DNA-binding protein required for DNA replication. In terms of biological role, plays several crucial roles in viral infection. Participates in the opening of the viral DNA origin to initiate replication by interacting with the origin-binding protein. May disrupt loops, hairpins and other secondary structures present on ssDNA to reduce and eliminate pausing of viral DNA polymerase at specific sites during elongation. Promotes viral DNA recombination by performing strand-transfer, characterized by the ability to transfer a DNA strand from a linear duplex to a complementary single-stranded DNA circle. Can also catalyze the renaturation of complementary single strands. Additionally, reorganizes the host cell nucleus, leading to the formation of prereplicative sites and replication compartments. This process is driven by the protein which can form double-helical filaments in the absence of DNA. This Saimiri sciureus (Common squirrel monkey) protein is Major DNA-binding protein.